Reading from the N-terminus, the 113-residue chain is Small ribosomal subunit protein bS6 (113 aa).

It belongs to the bacterial ribosomal protein bS6 family.

Functionally, binds together with bS18 to 16S ribosomal RNA. This is Small ribosomal subunit protein bS6 (rpsF) from Buchnera aphidicola subsp. Acyrthosiphon pisum (strain APS) (Acyrthosiphon pisum symbiotic bacterium).